The sequence spans 383 residues: Na(+)/H(+) antiporter NhaA (383 aa).

11 helical membrane-spanning segments follow: residues 10–30 (LIGGLILFSAALLAIVVNNSP), 56–76 (LMHWINDGLMAIYFLYIGLEI), 91–111 (IITPAIAAFAGLAMPSLIYLS), 121–141 (GWAIPSATDIAFTLAILALLG), 150–170 (LLVITIAIFDDIAAIAIIAIF), 174–194 (SLSLLSLSLGTLFILAMIICN), 206–226 (VVLGFFAWFCTIKSGVHATLA), 254–274 (PWIIYFILPVFAFANAGISFS), 289–308 (IIWGLFVGKQLGIFSILAVF), 327–347 (GISLLCGIGFTMSLFIGVLAF), and 355–375 (AIKIGVVVGSVLSGFFGYIVL).

The protein belongs to the NhaA Na(+)/H(+) (TC 2.A.33) antiporter family.

It is found in the cell inner membrane. The enzyme catalyses Na(+)(in) + 2 H(+)(out) = Na(+)(out) + 2 H(+)(in). Functionally, na(+)/H(+) antiporter that extrudes sodium in exchange for external protons. The sequence is that of Na(+)/H(+) antiporter NhaA from Francisella tularensis subsp. tularensis (strain WY96-3418).